The chain runs to 275 residues: Adenosylcobinamide-GDP ribazoletransferase (275 aa).

A run of 6 helical transmembrane segments spans residues 53–73 (WFVFLLFQFLFGPTIAFTISL), 113–133 (VGSFGAAGISLLLLLKVLGVS), 144–164 (LPFTFGSSAQIHLLSVWLYFV), 204–224 (FACIFGVTPFLALVYLHPYFL), 225–245 (LSLLCIIPSFVYMFSLMKRWI), and 253–273 (LGAVQQVVETCIWISGVFVWI).

Belongs to the CobS family. The cofactor is Mg(2+).

The protein resides in the cell inner membrane. It carries out the reaction alpha-ribazole + adenosylcob(III)inamide-GDP = adenosylcob(III)alamin + GMP + H(+). It catalyses the reaction alpha-ribazole 5'-phosphate + adenosylcob(III)inamide-GDP = adenosylcob(III)alamin 5'-phosphate + GMP + H(+). It participates in cofactor biosynthesis; adenosylcobalamin biosynthesis; adenosylcobalamin from cob(II)yrinate a,c-diamide: step 7/7. Joins adenosylcobinamide-GDP and alpha-ribazole to generate adenosylcobalamin (Ado-cobalamin). Also synthesizes adenosylcobalamin 5'-phosphate from adenosylcobinamide-GDP and alpha-ribazole 5'-phosphate. This Leptospira biflexa serovar Patoc (strain Patoc 1 / Ames) protein is Adenosylcobinamide-GDP ribazoletransferase.